We begin with the raw amino-acid sequence, 57 residues long: uncharacterized protein (57 aa).

A helical transmembrane segment spans residues 21-37 (GTYTLVVAFVLAFLVYS).

The protein localises to the host membrane. This is an uncharacterized protein from Human herpesvirus 6B (strain Z29) (HHV-6 variant B).